The sequence spans 63 residues: Large ribosomal subunit protein uL30 (63 aa).

It belongs to the universal ribosomal protein uL30 family. In terms of assembly, part of the 50S ribosomal subunit.

The sequence is that of Large ribosomal subunit protein uL30 from Rhodospirillum rubrum (strain ATCC 11170 / ATH 1.1.1 / DSM 467 / LMG 4362 / NCIMB 8255 / S1).